The chain runs to 314 residues: Protoheme IX farnesyltransferase 2 (314 aa).

9 consecutive transmembrane segments (helical) span residues 32-49 (VMSL…AAPV), 54-76 (LLAV…LNMW), 98-118 (IQPH…VMTL), 120-140 (VLVN…YAVV), 153-173 (IVIG…AVTG), 180-200 (IVLF…LALF), 226-246 (IFAY…LGYT), 249-269 (FYGV…WKVL), and 285-305 (FAYS…DSVV).

It belongs to the UbiA prenyltransferase family. Protoheme IX farnesyltransferase subfamily.

It is found in the cell inner membrane. It catalyses the reaction heme b + (2E,6E)-farnesyl diphosphate + H2O = Fe(II)-heme o + diphosphate. It functions in the pathway porphyrin-containing compound metabolism; heme O biosynthesis; heme O from protoheme: step 1/1. Converts heme B (protoheme IX) to heme O by substitution of the vinyl group on carbon 2 of heme B porphyrin ring with a hydroxyethyl farnesyl side group. The polypeptide is Protoheme IX farnesyltransferase 2 (Mesorhizobium japonicum (strain LMG 29417 / CECT 9101 / MAFF 303099) (Mesorhizobium loti (strain MAFF 303099))).